Consider the following 40-residue polypeptide: Sapecin-C (40 aa).

Disulfide bonds link Cys-3–Cys-30, Cys-16–Cys-36, and Cys-20–Cys-38.

The protein belongs to the invertebrate defensin family. Type 1 subfamily. Hemocytes and fat body.

Its subcellular location is the secreted. Its function is as follows. Sapecins, which are potent bactericidal proteins, are produced in response to injury. Sapecin C is cytotoxic to Gram-positive bacteria. This chain is Sapecin-C, found in Sarcophaga peregrina (Flesh fly).